A 384-amino-acid chain; its full sequence is Lipid-A-disaccharide synthase (384 aa).

Belongs to the LpxB family.

The catalysed reaction is 2-N,3-O-bis[(3R)-3-hydroxytetradecanoyl]-alpha-D-glucosaminyl 1-phosphate + UDP-2-N,3-O-bis[(3R)-3-hydroxytetradecanoyl]-alpha-D-glucosamine = lipid A disaccharide (E. coli) + UDP + H(+). It carries out the reaction a lipid X + a UDP-2-N,3-O-bis[(3R)-3-hydroxyacyl]-alpha-D-glucosamine = a lipid A disaccharide + UDP + H(+). It functions in the pathway glycolipid biosynthesis; lipid IV(A) biosynthesis; lipid IV(A) from (3R)-3-hydroxytetradecanoyl-[acyl-carrier-protein] and UDP-N-acetyl-alpha-D-glucosamine: step 5/6. Functionally, condensation of UDP-2,3-diacylglucosamine and 2,3-diacylglucosamine-1-phosphate to form lipid A disaccharide, a precursor of lipid A, a phosphorylated glycolipid that anchors the lipopolysaccharide to the outer membrane of the cell. This chain is Lipid-A-disaccharide synthase, found in Blochmanniella floridana.